The following is a 396-amino-acid chain: Acetate kinase (396 aa).

Asn-8 lines the Mg(2+) pocket. Lys-15 is an ATP binding site. Residue Arg-89 coordinates substrate. Residue Asp-146 is the Proton donor/acceptor of the active site. ATP-binding positions include 206–210 (HIGNG), 283–285 (DMR), and 331–335 (GMGEN). Glu-383 provides a ligand contact to Mg(2+).

Belongs to the acetokinase family. As to quaternary structure, homodimer. It depends on Mg(2+) as a cofactor. Mn(2+) is required as a cofactor.

It localises to the cytoplasm. It carries out the reaction acetate + ATP = acetyl phosphate + ADP. The protein operates within metabolic intermediate biosynthesis; acetyl-CoA biosynthesis; acetyl-CoA from acetate: step 1/2. Functionally, catalyzes the formation of acetyl phosphate from acetate and ATP. Can also catalyze the reverse reaction. The protein is Acetate kinase of Streptococcus uberis (strain ATCC BAA-854 / 0140J).